A 342-amino-acid polypeptide reads, in one-letter code: Holliday junction branch migration complex subunit RuvB (342 aa).

The tract at residues 2–181 (TDNPLLSSAS…FGIPVRLQFY (180 aa)) is large ATPase domain (RuvB-L). The ATP site is built by Leu-20, Arg-21, Gly-62, Lys-65, Thr-66, Thr-67, Arg-171, Tyr-181, and Arg-218. Thr-66 is a Mg(2+) binding site. Residues 182–252 (SVEELERVVA…IADNALTRLE (71 aa)) form a small ATPAse domain (RuvB-S) region. Residues 255 to 342 (KIGLDLQDRR…QMPGLFGPDE (88 aa)) form a head domain (RuvB-H) region. The DNA site is built by Arg-291, Arg-310, and Arg-315.

The protein belongs to the RuvB family. As to quaternary structure, homohexamer. Forms an RuvA(8)-RuvB(12)-Holliday junction (HJ) complex. HJ DNA is sandwiched between 2 RuvA tetramers; dsDNA enters through RuvA and exits via RuvB. An RuvB hexamer assembles on each DNA strand where it exits the tetramer. Each RuvB hexamer is contacted by two RuvA subunits (via domain III) on 2 adjacent RuvB subunits; this complex drives branch migration. In the full resolvosome a probable DNA-RuvA(4)-RuvB(12)-RuvC(2) complex forms which resolves the HJ.

The protein resides in the cytoplasm. The enzyme catalyses ATP + H2O = ADP + phosphate + H(+). Its function is as follows. The RuvA-RuvB-RuvC complex processes Holliday junction (HJ) DNA during genetic recombination and DNA repair, while the RuvA-RuvB complex plays an important role in the rescue of blocked DNA replication forks via replication fork reversal (RFR). RuvA specifically binds to HJ cruciform DNA, conferring on it an open structure. The RuvB hexamer acts as an ATP-dependent pump, pulling dsDNA into and through the RuvAB complex. RuvB forms 2 homohexamers on either side of HJ DNA bound by 1 or 2 RuvA tetramers; 4 subunits per hexamer contact DNA at a time. Coordinated motions by a converter formed by DNA-disengaged RuvB subunits stimulates ATP hydrolysis and nucleotide exchange. Immobilization of the converter enables RuvB to convert the ATP-contained energy into a lever motion, pulling 2 nucleotides of DNA out of the RuvA tetramer per ATP hydrolyzed, thus driving DNA branch migration. The RuvB motors rotate together with the DNA substrate, which together with the progressing nucleotide cycle form the mechanistic basis for DNA recombination by continuous HJ branch migration. Branch migration allows RuvC to scan DNA until it finds its consensus sequence, where it cleaves and resolves cruciform DNA. The polypeptide is Holliday junction branch migration complex subunit RuvB (Novosphingobium aromaticivorans (strain ATCC 700278 / DSM 12444 / CCUG 56034 / CIP 105152 / NBRC 16084 / F199)).